Reading from the N-terminus, the 211-residue chain is Small ribosomal subunit protein uS3 (211 aa).

One can recognise a KH type-2 domain in the interval 38–106; the sequence is LRKFIKKAFY…NIELNIIEVK (69 aa).

The protein belongs to the universal ribosomal protein uS3 family. Part of the 30S ribosomal subunit. Forms a tight complex with proteins S10 and S14.

Its function is as follows. Binds the lower part of the 30S subunit head. Binds mRNA in the 70S ribosome, positioning it for translation. The polypeptide is Small ribosomal subunit protein uS3 (Ehrlichia canis (strain Jake)).